The sequence spans 246 residues: 4-hydroxy-tetrahydrodipicolinate reductase (246 aa).

9–14 provides a ligand contact to NAD(+); it reads GNTGRM. NADP(+) is bound at residue R36. NAD(+) contacts are provided by residues 78–80 and 104–107; these read GTT and SPNM. The active-site Proton donor/acceptor is the H137. H138 is a (S)-2,3,4,5-tetrahydrodipicolinate binding site. K141 serves as the catalytic Proton donor. 147–148 contributes to the (S)-2,3,4,5-tetrahydrodipicolinate binding site; that stretch reads GT.

It belongs to the DapB family.

It is found in the cytoplasm. The enzyme catalyses (S)-2,3,4,5-tetrahydrodipicolinate + NAD(+) + H2O = (2S,4S)-4-hydroxy-2,3,4,5-tetrahydrodipicolinate + NADH + H(+). It catalyses the reaction (S)-2,3,4,5-tetrahydrodipicolinate + NADP(+) + H2O = (2S,4S)-4-hydroxy-2,3,4,5-tetrahydrodipicolinate + NADPH + H(+). The protein operates within amino-acid biosynthesis; L-lysine biosynthesis via DAP pathway; (S)-tetrahydrodipicolinate from L-aspartate: step 4/4. In terms of biological role, catalyzes the conversion of 4-hydroxy-tetrahydrodipicolinate (HTPA) to tetrahydrodipicolinate. The sequence is that of 4-hydroxy-tetrahydrodipicolinate reductase from Chlamydia muridarum (strain MoPn / Nigg).